The following is a 295-amino-acid chain: Protoheme IX farnesyltransferase 2 (295 aa).

The next 9 membrane-spanning stretches (helical) occupy residues 9–29, 36–56, 83–103, 108–128, 135–155, 163–183, 209–229, 230–250, and 264–284; these read ITKPGIIFGNVLSVAGGFFLA, FALFLAVVIGTSLVVASGCVF, LTLALAYATLLGVAGFSLLYV, LAAFCALVGFVVYVGFYSLWL, GTLVGSLSGAMPPVIGYCAVS, VTLLVMFSLWQMPHSFAIAIF, IVLYVLAFVLATVMLTLGGYA, GLGYLAVAAAMGLYWLYMAWG, and VFGFSILTVTALSVMMSVDSQ.

Belongs to the UbiA prenyltransferase family. Protoheme IX farnesyltransferase subfamily.

It localises to the cell inner membrane. It carries out the reaction heme b + (2E,6E)-farnesyl diphosphate + H2O = Fe(II)-heme o + diphosphate. It functions in the pathway porphyrin-containing compound metabolism; heme O biosynthesis; heme O from protoheme: step 1/1. Converts heme B (protoheme IX) to heme O by substitution of the vinyl group on carbon 2 of heme B porphyrin ring with a hydroxyethyl farnesyl side group. The chain is Protoheme IX farnesyltransferase 2 from Pseudomonas entomophila (strain L48).